A 443-amino-acid chain; its full sequence is MNSEQTYFFVGIKGTGMSSLALILHDKGYKVLGSDIDKYTFTQRGLENAGIKILPFDEDNIKEDMIVVAGNAFGDDQVEIKKAHEMGLTVQTYPETVEQIIEETTSIGVAGAHGKTSTSGLLAHVLSGVSPTSYLVGDGSGKGTPNARFFVFEADEYRRHFVAYHPDYAIMTNIDFDHPDYFTDIDDVRDAFETLAMQTKKGIFVWGEDENLRKLNAKVPVHYYGTKSDDDFRAENIKRTTKGSNFDVYFHDEFIGNYDIPMFGEHNVLNSLAVIAVSYMEKVDQQEIAKELLTFKGVKRRFTEKRVADMVIIDDYAHHPAEIKATIDAARQQYPDKKIIAVFQPHTFSRTIALMDEFAESLSLADKVYLTDIFSSIREHDGKVSSEDLGKKISKGGEVLKLDNMSPLLDFHDDVVIFMGAGDIQKYEHAYEDLLSNLSLKNN.

Residue 111 to 117 (GAHGKTS) participates in ATP binding.

It belongs to the MurCDEF family.

The protein localises to the cytoplasm. It catalyses the reaction UDP-N-acetyl-alpha-D-muramate + L-alanine + ATP = UDP-N-acetyl-alpha-D-muramoyl-L-alanine + ADP + phosphate + H(+). It functions in the pathway cell wall biogenesis; peptidoglycan biosynthesis. Functionally, cell wall formation. The chain is UDP-N-acetylmuramate--L-alanine ligase from Ligilactobacillus salivarius (strain UCC118) (Lactobacillus salivarius).